The primary structure comprises 342 residues: Aquaporin-7 (342 aa).

The Cytoplasmic segment spans residues 1–36 (MVQASGHRRSTRGSKMVSWSVIAKIQEILQRKMVRE). Serine 20 is subject to Phosphoserine. The helical transmembrane segment at 37-54 (FLAEFMSTYVMMVFGLGS) threads the bilayer. Residues 55 to 67 (VAHMVLNKKYGSY) are Extracellular-facing. The helical transmembrane segment at 68–85 (LGVNLGFGFGVTMGVHVA) threads the bilayer. Over 86–89 (GRIS) the chain is Cytoplasmic. Positions 90-103 (GAHMNAAVTFANCA) form an intramembrane region, discontinuously helical. Residues 94–96 (NAA) carry the NPA 1 motif. Over 104–111 (LGRVPWRK) the chain is Cytoplasmic. A helical membrane pass occupies residues 112–132 (FPVYVLGQFLGSFLAAATIYS). At 133–170 (LFYTAILHFSGGQLMVTGPVATAGIFATYLPDHMTLWR) the chain is on the extracellular side. A helical membrane pass occupies residues 171–188 (GFLNEAWLTGMLQLCLFA). Over 189–200 (ITDQENNPALPG) the chain is Cytoplasmic. Residues 201-217 (TEALVIGILVVIIGVSL) traverse the membrane as a helical segment. Residues 218–221 (GMNT) are Extracellular-facing. An intramembrane region (discontinuously helical) is located at residues 222–235 (GYAINPSRDLPPRI). Residues 226–228 (NPS) carry the NPA 2 motif. Over 236 to 253 (FTFIAGWGKQVFSNGENW) the chain is Extracellular. Residues 254–275 (WWVPVVAPLLGAYLGGIIYLVF) traverse the membrane as a helical segment. The Cytoplasmic segment spans residues 276 to 342 (IGSTIPREPL…LHESMALEHF (67 aa)).

The protein belongs to the MIP/aquaporin (TC 1.A.8) family. As to quaternary structure, homotetramer; each monomer provides an independent glycerol/water pore. Two homotetramers on opposing membranes can dimerize, forming a cell-cell junction. Interacts with PLIN1. Phosphorylation by PKA could prevent the interaction with PLIN1. Detected in the sperm head (at protein level). Detected in white adipose tissue.

Its subcellular location is the cell membrane. The protein resides in the cytoplasmic vesicle membrane. It is found in the lipid droplet. It catalyses the reaction glycerol(in) = glycerol(out). It carries out the reaction H2O(in) = H2O(out). The catalysed reaction is urea(in) = urea(out). With respect to regulation, glycerol transport is regulated by pH, with the porin being permeable to glycerol at pH 7.4 but not at pH 5.5. Water permeability, however, is not influenced by pH. Inhibited by mercury ions. In terms of biological role, aquaglyceroporins form homotetrameric transmembrane channels, with each monomer independently mediating glycerol and water transport across the plasma membrane along their osmotic gradient. Could also be permeable to urea. Mediates the efflux of glycerol, formed upon triglyceride hydrolysis, to avoid its accumulation in adipocytes and to make it available to other tissues. In the kidney, mediates the reabsorption of glycerol, preventing its loss in urine, again participating to energy homeostasis. In pancreatic beta cells, it also mediates the efflux of glycerol, regulating its intracellular levels. This Homo sapiens (Human) protein is Aquaporin-7.